The sequence spans 179 residues: ATP synthase subunit delta (179 aa).

It belongs to the ATPase delta chain family. As to quaternary structure, F-type ATPases have 2 components, F(1) - the catalytic core - and F(0) - the membrane proton channel. F(1) has five subunits: alpha(3), beta(3), gamma(1), delta(1), epsilon(1). F(0) has three main subunits: a(1), b(2) and c(10-14). The alpha and beta chains form an alternating ring which encloses part of the gamma chain. F(1) is attached to F(0) by a central stalk formed by the gamma and epsilon chains, while a peripheral stalk is formed by the delta and b chains.

The protein localises to the cell inner membrane. Its function is as follows. F(1)F(0) ATP synthase produces ATP from ADP in the presence of a proton or sodium gradient. F-type ATPases consist of two structural domains, F(1) containing the extramembraneous catalytic core and F(0) containing the membrane proton channel, linked together by a central stalk and a peripheral stalk. During catalysis, ATP synthesis in the catalytic domain of F(1) is coupled via a rotary mechanism of the central stalk subunits to proton translocation. This protein is part of the stalk that links CF(0) to CF(1). It either transmits conformational changes from CF(0) to CF(1) or is implicated in proton conduction. This is ATP synthase subunit delta from Burkholderia lata (strain ATCC 17760 / DSM 23089 / LMG 22485 / NCIMB 9086 / R18194 / 383).